We begin with the raw amino-acid sequence, 310 residues long: Thioredoxin reductase (310 aa).

FAD is bound at residue 35–42 (ERGMPGGQ). A disulfide bond links Cys134 and Cys137. Residue 277–286 (DVRDKGLRQI) participates in FAD binding.

This sequence belongs to the class-II pyridine nucleotide-disulfide oxidoreductase family. In terms of assembly, homodimer. Requires FAD as cofactor.

It localises to the cytoplasm. It carries out the reaction [thioredoxin]-dithiol + NADP(+) = [thioredoxin]-disulfide + NADPH + H(+). This chain is Thioredoxin reductase (trxB), found in Staphylococcus epidermidis (strain ATCC 35984 / DSM 28319 / BCRC 17069 / CCUG 31568 / BM 3577 / RP62A).